A 671-amino-acid chain; its full sequence is DNA ligase (671 aa).

NAD(+) contacts are provided by residues 32–36, 81–82, and Glu113; these read DAEYD and SL. The N6-AMP-lysine intermediate role is filled by Lys115. Positions 136, 173, 290, and 314 each coordinate NAD(+). Positions 408, 411, 426, and 432 each coordinate Zn(2+). One can recognise a BRCT domain in the interval 593-671; it reads EIDSPFAGKT…ETEMLHLLGS (79 aa).

It belongs to the NAD-dependent DNA ligase family. LigA subfamily. Requires Mg(2+) as cofactor. The cofactor is Mn(2+).

It catalyses the reaction NAD(+) + (deoxyribonucleotide)n-3'-hydroxyl + 5'-phospho-(deoxyribonucleotide)m = (deoxyribonucleotide)n+m + AMP + beta-nicotinamide D-nucleotide.. Its function is as follows. DNA ligase that catalyzes the formation of phosphodiester linkages between 5'-phosphoryl and 3'-hydroxyl groups in double-stranded DNA using NAD as a coenzyme and as the energy source for the reaction. It is essential for DNA replication and repair of damaged DNA. The protein is DNA ligase of Escherichia coli O6:K15:H31 (strain 536 / UPEC).